A 254-amino-acid polypeptide reads, in one-letter code: Fasciclin-like arabinogalactan protein 7 (254 aa).

Residues 1–22 (MAKMQLSIFIAVVALIVCSASA) form the signal peptide. An FAS1 domain is found at 44-186 (NVNLTELLSV…VAVYQVNRVL (143 aa)). N-linked (GlcNAc...) asparagine glycans are attached at residues Asn46, Asn78, Asn104, and Asn130. The segment at 203 to 233 (APAPIVSAPSDSPSVADSEGASSPKSSHKNS) is disordered. Positions 206–220 (PIVSAPSDSPSVADS) are enriched in low complexity. A compositionally biased stretch (polar residues) spans 222 to 233 (GASSPKSSHKNS). A lipid anchor (GPI-anchor amidated asparagine) is attached at Asn232. Positions 233–254 (SGQKLLLAPISMVISGLVALFL) are cleaved as a propeptide — removed in mature form.

It belongs to the fasciclin-like AGP family.

It is found in the cell membrane. In terms of biological role, may be a cell surface adhesion protein. The protein is Fasciclin-like arabinogalactan protein 7 (FLA7) of Arabidopsis thaliana (Mouse-ear cress).